A 374-amino-acid chain; its full sequence is tRNA-specific 2-thiouridylase MnmA (374 aa).

ATP-binding positions include 12–19 (GMSGGVDS) and Met-38. The interaction with target base in tRNA stretch occupies residues 98-100 (NPD). Cys-103 serves as the catalytic Nucleophile. A disulfide bridge links Cys-103 with Cys-202. Gly-128 is a binding site for ATP. The interaction with tRNA stretch occupies residues 152–154 (KDQ). Cys-202 functions as the Cysteine persulfide intermediate in the catalytic mechanism. Residues 316-317 (RY) form an interaction with tRNA region.

This sequence belongs to the MnmA/TRMU family.

It is found in the cytoplasm. It carries out the reaction S-sulfanyl-L-cysteinyl-[protein] + uridine(34) in tRNA + AH2 + ATP = 2-thiouridine(34) in tRNA + L-cysteinyl-[protein] + A + AMP + diphosphate + H(+). Catalyzes the 2-thiolation of uridine at the wobble position (U34) of tRNA, leading to the formation of s(2)U34. The polypeptide is tRNA-specific 2-thiouridylase MnmA (Vibrio parahaemolyticus serotype O3:K6 (strain RIMD 2210633)).